The primary structure comprises 248 residues: Phycocyanobilin:ferredoxin oxidoreductase (248 aa).

Belongs to the HY2 family.

It catalyses the reaction (2R,3Z)-phycocyanobilin + 4 oxidized [2Fe-2S]-[ferredoxin] = biliverdin IXalpha + 4 reduced [2Fe-2S]-[ferredoxin] + 4 H(+). In terms of biological role, catalyzes the four-electron reduction of biliverdin IX-alpha (2-electron reduction at both the A and D rings); the reaction proceeds via an isolatable 2-electron intermediate, 181,182-dihydrobiliverdin. The sequence is that of Phycocyanobilin:ferredoxin oxidoreductase from Synechococcus sp. (strain ATCC 27144 / PCC 6301 / SAUG 1402/1) (Anacystis nidulans).